We begin with the raw amino-acid sequence, 381 residues long: Spindlin interactor and repressor of chromatin-binding protein (381 aa).

Residues 42 to 73 (RVTQQEKTPPPRPSPLEAGSDGCEEPKQQVSW) form a disordered region. Residue lysine 48 forms a Glycyl lysine isopeptide (Lys-Gly) (interchain with G-Cter in SUMO2) linkage. Serine 121 and serine 148 each carry phosphoserine. Disordered stretches follow at residues 144 to 264 (AEQP…EVRH), 283 to 320 (QLRGPDSKDSPKDREVAEGGLPRAESPSPAPPPGLRGT), and 339 to 381 (LQDW…GNGV). Glycyl lysine isopeptide (Lys-Gly) (interchain with G-Cter in SUMO2) cross-links involve residues lysine 189 and lysine 220. A compositionally biased stretch (basic and acidic residues) spans 218-228 (RWKEPPGEEPV). 2 positions are modified to phosphoserine: serine 248 and serine 251. Positions 287–299 (PDSKDSPKDREVA) are enriched in basic and acidic residues. Glycyl lysine isopeptide (Lys-Gly) (interchain with G-Cter in SUMO2) cross-links involve residues lysine 290 and lysine 294. A phosphoserine mark is found at serine 308 and serine 310. Residue lysine 374 forms a Glycyl lysine isopeptide (Lys-Gly) (interchain with G-Cter in SUMO2) linkage.

As to quaternary structure, interacts with SPIN1, SPIN2A, SPIN2B, SPIN3 and SPIN4. Interacts with TCF7L2 in a SPIN1-dependent manner. Interacts with PARP1; promoting PARP1 ADP-ribosyltransferase activity.

It localises to the nucleus. The protein localises to the chromosome. Functionally, chromatin protein that stabilizes SPIN1 and enhances its association with histone H3 trimethylated at both 'Lys-4' and 'Lys-9' (H3K4me3K9me3). Positively regulates poly-ADP-ribosylation in response to DNA damage; acts by facilitating PARP1 ADP-ribosyltransferase activity. The polypeptide is Spindlin interactor and repressor of chromatin-binding protein (Homo sapiens (Human)).